We begin with the raw amino-acid sequence, 346 residues long: 3 beta-hydroxysteroid dehydrogenase/Delta 5--&gt;4-isomerase (346 aa).

Residue Y147 is the Proton acceptor of the active site. K151 contributes to the NAD(+) binding site.

Belongs to the 3-beta-HSD family.

The catalysed reaction is a 3beta-hydroxy-Delta(5)-steroid + NAD(+) = a 3-oxo-Delta(5)-steroid + NADH + H(+). It carries out the reaction a 3-oxo-Delta(5)-steroid = a 3-oxo-Delta(4)-steroid. It functions in the pathway lipid metabolism; steroid biosynthesis. Functionally, catalyzes the oxidative conversion of Delta(5)-ene-3-beta-hydroxy steroid, and the oxidative conversion of ketosteroids. The 3-beta-HSD enzymatic system plays a crucial role in the biosynthesis of all classes of hormonal steroids. During viral infection, steroid production contributes to virulence by inhibiting the host inflammatory response. The polypeptide is 3 beta-hydroxysteroid dehydrogenase/Delta 5--&gt;4-isomerase (OPG174) (Vaccinia virus (strain Western Reserve) (VACV)).